Here is a 182-residue protein sequence, read N- to C-terminus: MLISHSDLNQQLKSAGIGFNATELHGFLSGLLCGGLKDQSWLPLLYQFSNDNHAYPTGLVQPVTELYEKISQTLSDVEGFTFELGLTEDENVFAQADSLSDWANQFLLGLGLAQPKLAKEKGEIGEAVDDLQDICQLGYDEDDNEEELAEALEEIIEYVRTIAMLFYSHFNEEEIESKPVLH.

Belongs to the UPF0149 family.

The polypeptide is UPF0149 protein CGSHiGG_07585 (Haemophilus influenzae (strain PittGG)).